Here is a 101-residue protein sequence, read N- to C-terminus: Co-chaperonin GroES (101 aa).

It belongs to the GroES chaperonin family. In terms of assembly, heptamer of 7 subunits arranged in a ring. Interacts with the chaperonin GroEL.

It localises to the cytoplasm. Functionally, together with the chaperonin GroEL, plays an essential role in assisting protein folding. The GroEL-GroES system forms a nano-cage that allows encapsulation of the non-native substrate proteins and provides a physical environment optimized to promote and accelerate protein folding. GroES binds to the apical surface of the GroEL ring, thereby capping the opening of the GroEL channel. This chain is Co-chaperonin GroES, found in Thermus thermophilus (strain ATCC BAA-163 / DSM 7039 / HB27).